The sequence spans 509 residues: Probable Xaa-Pro aminopeptidase MAC_04092 (509 aa).

Positions 273, 284, 437, and 478 each coordinate Mn(2+).

Belongs to the peptidase M24B family. Requires Mn(2+) as cofactor.

It carries out the reaction Release of any N-terminal amino acid, including proline, that is linked to proline, even from a dipeptide or tripeptide.. Catalyzes the removal of a penultimate prolyl residue from the N-termini of peptides. This is Probable Xaa-Pro aminopeptidase MAC_04092 from Metarhizium acridum (strain CQMa 102).